An 85-amino-acid chain; its full sequence is Putative membrane protein insertion efficiency factor (85 aa).

This sequence belongs to the UPF0161 family.

The protein resides in the cell inner membrane. Could be involved in insertion of integral membrane proteins into the membrane. The polypeptide is Putative membrane protein insertion efficiency factor (Shewanella woodyi (strain ATCC 51908 / MS32)).